The primary structure comprises 212 residues: Ras-related protein Rab-21 (212 aa).

Residues 14-21, 62-66, and 120-123 contribute to the GTP site; these read GEGCVGKT, DTAGQ, and NKCD. A disordered region spans residues 181 to 212; that stretch reads TNTTGQTTNRSERIPIVPDSDSGNKQPGCCSN. Residues 201–212 are compositionally biased toward polar residues; sequence DSGNKQPGCCSN. 2 S-geranylgeranyl cysteine lipidation sites follow: cysteine 209 and cysteine 210.

Belongs to the small GTPase superfamily. Rab family. Interacts with LIM domain proteins limF and ChLim.

The protein localises to the cell membrane. Its function is as follows. Involved in the regulation of phagocytosis. In Dictyostelium discoideum (Social amoeba), this protein is Ras-related protein Rab-21 (rab21).